The sequence spans 896 residues: Translation initiation factor IF-2 (896 aa).

Residues Ala117–Lys174 are compositionally biased toward basic and acidic residues. The segment at Ala117–Asp303 is disordered. Residues Leu175–Ala195 show a composition bias toward low complexity. A compositionally biased stretch (basic and acidic residues) spans Asp196–Val227. Positions Pro254–Ala268 are enriched in low complexity. One can recognise a tr-type G domain in the interval Pro396–Glu563. The segment at Gly405–Thr412 is G1. Residue Gly405 to Thr412 participates in GTP binding. The G2 stretch occupies residues Gly430–His434. The interval Asp451–Gly454 is G3. GTP is bound by residues Asp451 to His455 and Asn505 to Asp508. Residues Asn505–Asp508 form a G4 region. The interval Ser541–Lys543 is G5.

The protein belongs to the TRAFAC class translation factor GTPase superfamily. Classic translation factor GTPase family. IF-2 subfamily.

Its subcellular location is the cytoplasm. In terms of biological role, one of the essential components for the initiation of protein synthesis. Protects formylmethionyl-tRNA from spontaneous hydrolysis and promotes its binding to the 30S ribosomal subunits. Also involved in the hydrolysis of GTP during the formation of the 70S ribosomal complex. The protein is Translation initiation factor IF-2 of Shewanella pealeana (strain ATCC 700345 / ANG-SQ1).